Here is a 94-residue protein sequence, read N- to C-terminus: Pyrimidine/purine nucleoside phosphorylase (94 aa).

This sequence belongs to the nucleoside phosphorylase PpnP family.

The enzyme catalyses a purine D-ribonucleoside + phosphate = a purine nucleobase + alpha-D-ribose 1-phosphate. The catalysed reaction is adenosine + phosphate = alpha-D-ribose 1-phosphate + adenine. It carries out the reaction cytidine + phosphate = cytosine + alpha-D-ribose 1-phosphate. It catalyses the reaction guanosine + phosphate = alpha-D-ribose 1-phosphate + guanine. The enzyme catalyses inosine + phosphate = alpha-D-ribose 1-phosphate + hypoxanthine. The catalysed reaction is thymidine + phosphate = 2-deoxy-alpha-D-ribose 1-phosphate + thymine. It carries out the reaction uridine + phosphate = alpha-D-ribose 1-phosphate + uracil. It catalyses the reaction xanthosine + phosphate = alpha-D-ribose 1-phosphate + xanthine. In terms of biological role, catalyzes the phosphorolysis of diverse nucleosides, yielding D-ribose 1-phosphate and the respective free bases. Can use uridine, adenosine, guanosine, cytidine, thymidine, inosine and xanthosine as substrates. Also catalyzes the reverse reactions. The protein is Pyrimidine/purine nucleoside phosphorylase of Aeromonas salmonicida (strain A449).